The sequence spans 395 residues: MRN complex-interacting protein (395 aa).

The segment covering 90 to 100 (DPKSEQEEAHV) has biased composition (basic and acidic residues). Disordered regions lie at residues 90 to 155 (DPKS…GGNC) and 180 to 275 (KRSS…FGES). Residues 104 to 113 (SKYTDQTTEG) are compositionally biased toward polar residues. Positions 117–127 (EKDDEDEDENV) are enriched in acidic residues. Positions 142-145 (RKKM) match the Nuclear localization signal (NLS) motif. Over residues 183–195 (SSSWNKGSVSKYS) the composition is skewed to low complexity. Composition is skewed to polar residues over residues 224–244 (ACSSSTNTMENSIGNKQQIKS) and 260–270 (QSESPSVSSHQ).

This sequence belongs to the MRNIP family.

It is found in the nucleus. It localises to the nucleoplasm. Plays a role in the cellular response to DNA damage and the maintenance of genome stability through its association with the MRN damage-sensing complex. Promotes chromatin loading and activity of the MRN complex to facilitate subsequent ATM-mediated DNA damage response signaling and DNA repair. The chain is MRN complex-interacting protein from Danio rerio (Zebrafish).